A 144-amino-acid polypeptide reads, in one-letter code: Large ribosomal subunit protein uL22 (144 aa).

Over residues 124-137 (RLKKRVLGQNKRKQ) the composition is skewed to basic residues. The disordered stretch occupies residues 124 to 144 (RLKKRVLGQNKRKQSVSGEKK).

It belongs to the universal ribosomal protein uL22 family. Part of the 50S ribosomal subunit.

Functionally, this protein binds specifically to 23S rRNA; its binding is stimulated by other ribosomal proteins, e.g. L4, L17, and L20. It is important during the early stages of 50S assembly. It makes multiple contacts with different domains of the 23S rRNA in the assembled 50S subunit and ribosome. The globular domain of the protein is located near the polypeptide exit tunnel on the outside of the subunit, while an extended beta-hairpin is found that lines the wall of the exit tunnel in the center of the 70S ribosome. This Mycoplasmoides gallisepticum (strain R(low / passage 15 / clone 2)) (Mycoplasma gallisepticum) protein is Large ribosomal subunit protein uL22.